We begin with the raw amino-acid sequence, 66 residues long: Large ribosomal subunit protein uL29 (66 aa).

It belongs to the universal ribosomal protein uL29 family.

The polypeptide is Large ribosomal subunit protein uL29 (Allorhizobium ampelinum (strain ATCC BAA-846 / DSM 112012 / S4) (Agrobacterium vitis (strain S4))).